The following is a 62-amino-acid chain: ATP synthase subunit epsilon, mitochondrial (62 aa).

T52 is subject to Phosphothreonine.

It belongs to the eukaryotic ATPase epsilon family. F-type ATPases have 2 components, CF(1) - the catalytic core - and CF(0) - the membrane proton channel. CF(1) has five subunits: alpha(3), beta(3), gamma(1), delta(1), epsilon(1). CF(0) has three main subunits: a, b and c.

It localises to the mitochondrion. Its subcellular location is the mitochondrion inner membrane. Functionally, mitochondrial membrane ATP synthase (F(1)F(0) ATP synthase or Complex V) produces ATP from ADP in the presence of a proton gradient across the membrane which is generated by electron transport complexes of the respiratory chain. F-type ATPases consist of two structural domains, F(1) - containing the extramembraneous catalytic core, and F(0) - containing the membrane proton channel, linked together by a central stalk and a peripheral stalk. During catalysis, ATP synthesis in the catalytic domain of F(1) is coupled via a rotary mechanism of the central stalk subunits to proton translocation. Part of the complex F(1) domain and of the central stalk which is part of the complex rotary element. Rotation of the central stalk against the surrounding alpha(3)beta(3) subunits leads to hydrolysis of ATP in three separate catalytic sites on the beta subunits. This Saccharomyces cerevisiae (strain ATCC 204508 / S288c) (Baker's yeast) protein is ATP synthase subunit epsilon, mitochondrial (ATP15).